Consider the following 491-residue polypeptide: Ketol-acid reductoisomerase (NADP(+)) (491 aa).

Residues Ala-15–Ser-208 enclose the KARI N-terminal Rossmann domain. NADP(+) contacts are provided by residues Cys-45–Gln-48, Arg-68, Arg-76, Ser-78, and Asp-108–Gln-110. The active site involves His-132. Gly-158 contacts NADP(+). 2 consecutive KARI C-terminal knotted domains span residues Ser-209–Gln-344 and Tyr-345–Met-484. Mg(2+)-binding residues include Asp-217, Glu-221, Glu-389, and Glu-393. Ser-414 is a substrate binding site.

It belongs to the ketol-acid reductoisomerase family. Requires Mg(2+) as cofactor.

The enzyme catalyses (2R)-2,3-dihydroxy-3-methylbutanoate + NADP(+) = (2S)-2-acetolactate + NADPH + H(+). It catalyses the reaction (2R,3R)-2,3-dihydroxy-3-methylpentanoate + NADP(+) = (S)-2-ethyl-2-hydroxy-3-oxobutanoate + NADPH + H(+). Its pathway is amino-acid biosynthesis; L-isoleucine biosynthesis; L-isoleucine from 2-oxobutanoate: step 2/4. The protein operates within amino-acid biosynthesis; L-valine biosynthesis; L-valine from pyruvate: step 2/4. In terms of biological role, involved in the biosynthesis of branched-chain amino acids (BCAA). Catalyzes an alkyl-migration followed by a ketol-acid reduction of (S)-2-acetolactate (S2AL) to yield (R)-2,3-dihydroxy-isovalerate. In the isomerase reaction, S2AL is rearranged via a Mg-dependent methyl migration to produce 3-hydroxy-3-methyl-2-ketobutyrate (HMKB). In the reductase reaction, this 2-ketoacid undergoes a metal-dependent reduction by NADPH to yield (R)-2,3-dihydroxy-isovalerate. In Escherichia coli (strain ATCC 8739 / DSM 1576 / NBRC 3972 / NCIMB 8545 / WDCM 00012 / Crooks), this protein is Ketol-acid reductoisomerase (NADP(+)).